The sequence spans 561 residues: Putative transport protein YbjL (561 aa).

A run of 5 helical transmembrane segments spans residues 8–28 (LLNGNYILLLFVVLALGLCLG), 32–52 (LGSIQLGNSIGVLVVSLLLGQ), 66–86 (FMLFIFCVGVEAGPNFFSIFF), 94–114 (MLALVMVGSALVIALGLGKLF), and 158–178 (NLSLGYALTYLIGLVSLIVGA). 2 consecutive RCK C-terminal domains span residues 200–288 (RGLD…SFRN) and 292–373 (VFDR…RIGF). A run of 6 helical transmembrane segments spans residues 383 to 403 (LLAFCAFFVIGLMIGMITFQF), 406 to 426 (FSFGMGNAAGLLFAGIMLGFM), 451 to 471 (VFMAGVGLSAGSGINNGLGAI), 475 to 495 (MLIAGLIVSLVPVVICFLFGA), 503 to 523 (ALLFGAMMGARTCAPAMEIIS), and 540 to 560 (AIANVLLTLAGTIIVMVCPGL).

The protein belongs to the AAE transporter (TC 2.A.81) family. YbjL subfamily.

Its subcellular location is the cell membrane. The sequence is that of Putative transport protein YbjL from Shigella dysenteriae serotype 1 (strain Sd197).